The following is a 148-amino-acid chain: Snaclec B1 (148 aa).

Positions 1 to 24 (MGRIIFVSFGLLVVFLSLSGTGAA) are cleaved as a signal peptide. Disulfide bonds link cysteine 27/cysteine 38, cysteine 55/cysteine 144, and cysteine 121/cysteine 136. Positions 34 to 145 (YDQHCYKVFD…CRLLGHFVCK (112 aa)) constitute a C-type lectin domain.

It belongs to the snaclec family. Heterodimer; disulfide-linked. As to expression, expressed by the venom gland.

Its subcellular location is the secreted. In terms of biological role, interferes with one step of hemostasis (modulation of platelet aggregation, or coagulation cascade, for example). This Macrovipera lebetinus (Levantine viper) protein is Snaclec B1.